A 146-amino-acid polypeptide reads, in one-letter code: Small ribosomal subunit protein uS9x (146 aa).

It belongs to the universal ribosomal protein uS9 family.

It is found in the cytoplasm. The protein is Small ribosomal subunit protein uS9x (RPS16C) of Arabidopsis thaliana (Mouse-ear cress).